Here is a 168-residue protein sequence, read N- to C-terminus: Nascent polypeptide-associated complex subunit alpha (168 aa).

Residues 14-78 (SKNEKKAREL…PKVDDFTRRL (65 aa)) enclose the NAC-A/B domain. Residues 83 to 129 (QQAASAAKDPQSIQADMAAAAAAPAAPAAPAAAPEEDEAGQVDESGL) form a disordered region. A compositionally biased stretch (low complexity) spans 100–115 (AAAAAAPAAPAAPAAA). The UBA domain maps to 129–168 (LDGQDIELVMQQANVSRNKAVKALREHNSDIVNAIMSLSK).

Belongs to the NAC-alpha family. In terms of assembly, part of the nascent polypeptide-associated complex (NAC), consisting of EGD2 and EGD1. NAC associates with ribosomes via EGD1.

It localises to the cytoplasm. It is found in the nucleus. Functionally, component of the nascent polypeptide-associated complex (NAC), a dynamic component of the ribosomal exit tunnel, protecting the emerging polypeptides from interaction with other cytoplasmic proteins to ensure appropriate nascent protein targeting. The NAC complex also promotes mitochondrial protein import by enhancing productive ribosome interactions with the outer mitochondrial membrane and blocks the inappropriate interaction of ribosomes translating non-secretory nascent polypeptides with translocation sites in the membrane of the endoplasmic reticulum. EGD2 may also be involved in transcription regulation. The protein is Nascent polypeptide-associated complex subunit alpha (EGD2) of Eremothecium gossypii (strain ATCC 10895 / CBS 109.51 / FGSC 9923 / NRRL Y-1056) (Yeast).